Reading from the N-terminus, the 865-residue chain is V-type proton ATPase 116 kDa subunit a 3 (865 aa).

Over 1–409 (MGSIYRSEHM…VNPAPWTIIS (409 aa)) the chain is Cytoplasmic. Positions 51–121 (FVNEVRRCDE…NKNCKVLKNN (71 aa)) form a coiled coil. A helical membrane pass occupies residues 410–430 (FPFLFAVMFGDAGHGIIMLIA). Residues 431–453 (ASAFVIFEKKLISMKIKDEIFNT) are Extracellular-facing. The helical transmembrane segment at 454-474 (FFGGRYVVLLMGMFAIYTGFI) threads the bilayer. The Cytoplasmic segment spans residues 475–556 (YNDFYSKSVN…FLNPMKMKTS (82 aa)). A helical membrane pass occupies residues 557–577 (ILLGISQMAFGIMLSLMNHIG). Asn-578 carries an N-linked (GlcNAc...) asparagine glycan. Topologically, residues 578-583 (NRSVVD) are extracellular. A helical transmembrane segment spans residues 584–604 (IVFVFIPQCLFLGCIFVYLCL). Topologically, residues 605-623 (QVLMKWIFFYVKPAYIFGR) are cytoplasmic. The chain crosses the membrane as a helical span at residues 624–644 (LYPGSNCAPSLLIGLINMFMV). Residues 645–688 (KSRDASFAHDVGTAAGKEWVIVNGQNVTYTINDQCYLQQWYPNQ) lie on the Extracellular side of the membrane. N-linked (GlcNAc...) asparagine glycans are attached at residues Asn-670 and Asn-687. The helical transmembrane segment at 689-709 (SLVELILLLIAVVSVPVMLLV) threads the bilayer. Residues 710–798 (KPFYIRWRHS…LTMGGWGGSA (89 aa)) lie on the Cytoplasmic side of the membrane. The helical transmembrane segment at 799-819 (AITILFYFIFSILSVCILILM) threads the bilayer. Residues 820–865 (EGLSAFLHAIRLHWVEFQSKFYGGTGIQFEPFCFTKIIRVYEGLDQ) lie on the Extracellular side of the membrane.

This sequence belongs to the V-ATPase 116 kDa subunit family. V-ATPase is a heteromultimeric enzyme made up of two complexes: the ATP-hydrolytic V1 complex and the proton translocation V0 complex. The V1 complex consists of three catalytic AB heterodimers that form a heterohexamer, three peripheral stalks each consisting of EG heterodimers, one central rotor including subunits D and F, and the regulatory subunits C and H. The proton translocation complex V0 consists of the proton transport subunit a, a ring of proteolipid subunits c9c'', rotary subunit d, subunits e and f, and the accessory subunits vah-19/Ac45 and vah-20/PRR. Interacts with V-type proton ATPase subunit C vha-11.

The protein localises to the apical cell membrane. Subunit of the V0 complex of vacuolar(H+)-ATPase (V-ATPase), a multisubunit enzyme composed of a peripheral complex (V1) that hydrolyzes ATP and a membrane integral complex (V0) that translocates protons. V-ATPase is responsible for acidifying and maintaining the pH of intracellular compartments and in some cell types, is targeted to the plasma membrane, where it is responsible for acidifying the extracellular environment. In the intestine, required for the rhythmic defecation behavior by promoting acidification in the gut lumen following defecation. Also, luminal acidification is required for nutrient uptake. This Caenorhabditis elegans protein is V-type proton ATPase 116 kDa subunit a 3.